The sequence spans 577 residues: (E)-beta-farnesene synthase (577 aa).

Aspartate 327, aspartate 331, aspartate 474, serine 478, and glutamate 482 together coordinate Mg(2+). The short motif at 327-331 (DDTFD) is the DDXXD motif element.

It belongs to the terpene synthase family. It depends on Mg(2+) as a cofactor. Requires Co(2+) as cofactor. Mn(2+) is required as a cofactor. In terms of tissue distribution, expressed in flowers.

Its subcellular location is the cytoplasm. It catalyses the reaction (2E,6E)-farnesyl diphosphate = (E)-beta-farnesene + diphosphate. Its pathway is secondary metabolite biosynthesis; terpenoid biosynthesis. Strongly inhibited by manganese at concentration higher than 20 uM. Sesquiterpene cyclase catalyzing the production of beta-farnesene from farnesyl diphosphate. Unable to use geranyl diphosphate as substrate. In Artemisia annua (Sweet wormwood), this protein is (E)-beta-farnesene synthase (CASC125).